We begin with the raw amino-acid sequence, 178 residues long: Large ribosomal subunit protein bL25 (178 aa).

This sequence belongs to the bacterial ribosomal protein bL25 family. CTC subfamily. Part of the 50S ribosomal subunit; part of the 5S rRNA/L5/L18/L25 subcomplex. Contacts the 5S rRNA. Binds to the 5S rRNA independently of L5 and L18.

In terms of biological role, this is one of the proteins that binds to the 5S RNA in the ribosome where it forms part of the central protuberance. This is Large ribosomal subunit protein bL25 from Nitratiruptor sp. (strain SB155-2).